Here is a 361-residue protein sequence, read N- to C-terminus: Beta-hexosaminidase (361 aa).

Residues Asp-69, Arg-77, Arg-144, and 174 to 175 each bind substrate; that span reads KH. His-187 serves as the catalytic Proton donor/acceptor. Residue Asp-258 is the Nucleophile of the active site.

It belongs to the glycosyl hydrolase 3 family. NagZ subfamily.

The protein localises to the cytoplasm. It carries out the reaction Hydrolysis of terminal non-reducing N-acetyl-D-hexosamine residues in N-acetyl-beta-D-hexosaminides.. It functions in the pathway cell wall biogenesis; peptidoglycan recycling. Its function is as follows. Plays a role in peptidoglycan recycling by cleaving the terminal beta-1,4-linked N-acetylglucosamine (GlcNAc) from peptide-linked peptidoglycan fragments, giving rise to free GlcNAc, anhydro-N-acetylmuramic acid and anhydro-N-acetylmuramic acid-linked peptides. The sequence is that of Beta-hexosaminidase from Neisseria gonorrhoeae (strain ATCC 700825 / FA 1090).